A 377-amino-acid polypeptide reads, in one-letter code: Phosphatidylglycerol--prolipoprotein diacylglyceryl transferase (377 aa).

Transmembrane regions (helical) follow at residues 18-38 (PVPLRAYALMIIIGIVVAVVV), 48-68 (MDPALAGEIAYWAVPFGIVGA), 93-113 (IWNGGLGIWGAIAGGALGAWL), and 119-139 (GISLALFADAAAPGIILAQAI). Arg-141 is a binding site for a 1,2-diacyl-sn-glycero-3-phospho-(1'-sn-glycerol). 3 helical membrane passes run 177–197 (QPTFLYEFLWNLVVAAILLLV), 208–228 (LFALYVALYTFGRLWIEMLRI), and 238–258 (RVNIWTSAIVCVGAVVALLVV). Residues 265–377 (DVSPQEQRAL…RTRVERPPAT (113 aa)) form a disordered region. 2 stretches are compositionally biased toward low complexity: residues 288-297 (AAGETAGETR) and 308-344 (GVDVNGADVDGADPSNVNGANVNGADPVNVNVNDADG).

The protein belongs to the Lgt family.

The protein resides in the cell membrane. It carries out the reaction L-cysteinyl-[prolipoprotein] + a 1,2-diacyl-sn-glycero-3-phospho-(1'-sn-glycerol) = an S-1,2-diacyl-sn-glyceryl-L-cysteinyl-[prolipoprotein] + sn-glycerol 1-phosphate + H(+). It participates in protein modification; lipoprotein biosynthesis (diacylglyceryl transfer). Functionally, catalyzes the transfer of the diacylglyceryl group from phosphatidylglycerol to the sulfhydryl group of the N-terminal cysteine of a prolipoprotein, the first step in the formation of mature lipoproteins. This is Phosphatidylglycerol--prolipoprotein diacylglyceryl transferase from Frankia alni (strain DSM 45986 / CECT 9034 / ACN14a).